Reading from the N-terminus, the 240-residue chain is Adapter protein MecA (240 aa).

Residues 119–132 (QRKQQKKNHQDKQQ) are compositionally biased toward basic and acidic residues. The segment at 119–138 (QRKQQKKNHQDKQQRRAHKP) is disordered.

Belongs to the MecA family. In terms of assembly, homodimer.

Its function is as follows. Enables the recognition and targeting of unfolded and aggregated proteins to the ClpC protease or to other proteins involved in proteolysis. In Staphylococcus epidermidis (strain ATCC 35984 / DSM 28319 / BCRC 17069 / CCUG 31568 / BM 3577 / RP62A), this protein is Adapter protein MecA.